The following is a 78-amino-acid chain: Large ribosomal subunit protein bL28 (78 aa).

Positions 1-20 (MSRVCQVTGKRPVTGNNRSH) are disordered.

It belongs to the bacterial ribosomal protein bL28 family.

The chain is Large ribosomal subunit protein bL28 from Vibrio parahaemolyticus serotype O3:K6 (strain RIMD 2210633).